The primary structure comprises 322 residues: Quinolinate synthase (322 aa).

Residues His-37 and Ser-54 each coordinate iminosuccinate. Cys-99 is a binding site for [4Fe-4S] cluster. Residues 125–127 (YVN) and Ser-142 contribute to the iminosuccinate site. Cys-185 is a [4Fe-4S] cluster binding site. Residues 211-213 (HPE) and Thr-228 contribute to the iminosuccinate site. Cys-278 contributes to the [4Fe-4S] cluster binding site.

It belongs to the quinolinate synthase family. Type 2 subfamily. The cofactor is [4Fe-4S] cluster.

The protein localises to the cytoplasm. The catalysed reaction is iminosuccinate + dihydroxyacetone phosphate = quinolinate + phosphate + 2 H2O + H(+). It participates in cofactor biosynthesis; NAD(+) biosynthesis; quinolinate from iminoaspartate: step 1/1. Its function is as follows. Catalyzes the condensation of iminoaspartate with dihydroxyacetone phosphate to form quinolinate. The polypeptide is Quinolinate synthase (Chlorobaculum tepidum (strain ATCC 49652 / DSM 12025 / NBRC 103806 / TLS) (Chlorobium tepidum)).